A 179-amino-acid chain; its full sequence is MSRIGKRPIEIPSGVKVSYVTPILKVEGPKGSLLREIMSDIALEIEEKSVSVNRADDAIKSRSAHGLTRTLINNMVVGVTKGFEKILEINGVGYRAEAKGDVLSLSLGYSHPINFPLPKGITVEVDKMTKVFVRGIDKELVGQTAAKIRSFRGPEPYKGKGIKYADERILRKAGKTGKK.

It belongs to the universal ribosomal protein uL6 family. As to quaternary structure, part of the 50S ribosomal subunit.

Functionally, this protein binds to the 23S rRNA, and is important in its secondary structure. It is located near the subunit interface in the base of the L7/L12 stalk, and near the tRNA binding site of the peptidyltransferase center. This is Large ribosomal subunit protein uL6 from Geobacter metallireducens (strain ATCC 53774 / DSM 7210 / GS-15).